Consider the following 505-residue polypeptide: Lysine--tRNA ligase (505 aa).

Mg(2+)-binding residues include E415 and E422.

It belongs to the class-II aminoacyl-tRNA synthetase family. In terms of assembly, homodimer. It depends on Mg(2+) as a cofactor.

Its subcellular location is the cytoplasm. It carries out the reaction tRNA(Lys) + L-lysine + ATP = L-lysyl-tRNA(Lys) + AMP + diphosphate. This Escherichia coli (strain K12) protein is Lysine--tRNA ligase (lysS).